Reading from the N-terminus, the 122-residue chain is Ribosome-binding factor A (122 aa).

This sequence belongs to the RbfA family. In terms of assembly, monomer. Binds 30S ribosomal subunits, but not 50S ribosomal subunits or 70S ribosomes.

The protein resides in the cytoplasm. In terms of biological role, one of several proteins that assist in the late maturation steps of the functional core of the 30S ribosomal subunit. Associates with free 30S ribosomal subunits (but not with 30S subunits that are part of 70S ribosomes or polysomes). Required for efficient processing of 16S rRNA. May interact with the 5'-terminal helix region of 16S rRNA. The protein is Ribosome-binding factor A of Prosthecochloris aestuarii (strain DSM 271 / SK 413).